A 31-amino-acid chain; its full sequence is Cytochrome b6-f complex subunit 6 (31 aa).

A helical membrane pass occupies residues 4 to 24; the sequence is IISYFGLLLATLTFTIVLFVG.

This sequence belongs to the PetL family. The 4 large subunits of the cytochrome b6-f complex are cytochrome b6, subunit IV (17 kDa polypeptide, PetD), cytochrome f and the Rieske protein, while the 4 small subunits are PetG, PetL, PetM and PetN. The complex functions as a dimer.

The protein resides in the plastid. It localises to the chloroplast thylakoid membrane. Component of the cytochrome b6-f complex, which mediates electron transfer between photosystem II (PSII) and photosystem I (PSI), cyclic electron flow around PSI, and state transitions. PetL is important for photoautotrophic growth as well as for electron transfer efficiency and stability of the cytochrome b6-f complex. In Staurastrum punctulatum (Green alga), this protein is Cytochrome b6-f complex subunit 6.